The sequence spans 336 residues: N-lysine methyltransferase KMT5A-B (336 aa).

2 disordered regions span residues 1–107 (MGRG…SSKQ) and 141–165 (QSQK…NRKL). A compositionally biased stretch (basic and acidic residues) spans 67–93 (SVAHHESKNLGKPTTETRKKAEVEKKR). The span at 95–104 (SSATELSVKS) shows a compositional bias: polar residues. Positions 146–162 (VKNKSQRRKAQRKKSPN) are enriched in basic residues. Residues 200–321 (DGMKMDMIIG…VGEELLYDYG (122 aa)) enclose the SET domain. Residues 210–212 (KGR), Y255, and 282–283 (NH) contribute to the S-adenosyl-L-methionine site.

The protein belongs to the class V-like SAM-binding methyltransferase superfamily. Histone-lysine methyltransferase family. PR/SET subfamily. In terms of processing, phosphorylated during mitosis.

The protein resides in the nucleus. It is found in the chromosome. It catalyses the reaction L-lysyl(20)-[histone H4] + S-adenosyl-L-methionine = N(6)-methyl-L-lysyl(20)-[histone H4] + S-adenosyl-L-homocysteine + H(+). It carries out the reaction L-lysyl-[protein] + S-adenosyl-L-methionine = N(6)-methyl-L-lysyl-[protein] + S-adenosyl-L-homocysteine + H(+). In terms of biological role, protein-lysine N-methyltransferase that monomethylates both histones and non-histone proteins. Specifically monomethylates 'Lys-20' of histone H4 (H4K20me1). H4K20me1 is enriched during mitosis and represents a specific tag for epigenetic transcriptional repression. Mainly functions in euchromatin regions, thereby playing a central role in the silencing of euchromatic genes. Required for cell proliferation, probably by contributing to the maintenance of proper higher-order structure of DNA during mitosis. Involved in chromosome condensation and proper cytokinesis. The sequence is that of N-lysine methyltransferase KMT5A-B from Xenopus laevis (African clawed frog).